Here is a 448-residue protein sequence, read N- to C-terminus: Probable glycine dehydrogenase (decarboxylating) subunit 1 (448 aa).

The protein belongs to the GcvP family. N-terminal subunit subfamily. As to quaternary structure, the glycine cleavage system is composed of four proteins: P, T, L and H. In this organism, the P 'protein' is a heterodimer of two subunits.

It carries out the reaction N(6)-[(R)-lipoyl]-L-lysyl-[glycine-cleavage complex H protein] + glycine + H(+) = N(6)-[(R)-S(8)-aminomethyldihydrolipoyl]-L-lysyl-[glycine-cleavage complex H protein] + CO2. Its function is as follows. The glycine cleavage system catalyzes the degradation of glycine. The P protein binds the alpha-amino group of glycine through its pyridoxal phosphate cofactor; CO(2) is released and the remaining methylamine moiety is then transferred to the lipoamide cofactor of the H protein. The polypeptide is Probable glycine dehydrogenase (decarboxylating) subunit 1 (gcvPA) (Bacillus subtilis (strain 168)).